The primary structure comprises 298 residues: tRNA pseudouridine synthase B (298 aa).

Asp-44 serves as the catalytic Nucleophile.

It belongs to the pseudouridine synthase TruB family. Type 1 subfamily.

It carries out the reaction uridine(55) in tRNA = pseudouridine(55) in tRNA. In terms of biological role, responsible for synthesis of pseudouridine from uracil-55 in the psi GC loop of transfer RNAs. In Mycobacteroides abscessus (strain ATCC 19977 / DSM 44196 / CCUG 20993 / CIP 104536 / JCM 13569 / NCTC 13031 / TMC 1543 / L948) (Mycobacterium abscessus), this protein is tRNA pseudouridine synthase B.